The following is a 284-amino-acid chain: L-ribulose-5-phosphate 3-epimerase UlaE (284 aa).

Belongs to the L-ribulose-5-phosphate 3-epimerase family.

The enzyme catalyses L-ribulose 5-phosphate = L-xylulose 5-phosphate. It participates in cofactor degradation; L-ascorbate degradation; D-xylulose 5-phosphate from L-ascorbate: step 3/4. Functionally, catalyzes the isomerization of L-xylulose-5-phosphate to L-ribulose-5-phosphate. Is involved in the anaerobic L-ascorbate utilization. This is L-ribulose-5-phosphate 3-epimerase UlaE from Salmonella typhi.